Here is a 333-residue protein sequence, read N- to C-terminus: Fructose-1,6-bisphosphatase class 1 (333 aa).

Residues E89, D110, L112, and D113 each coordinate Mg(2+). Substrate-binding positions include 113 to 116 (DGSS), N206, Y239, 257 to 259 (YLY), and K269. E275 lines the Mg(2+) pocket.

This sequence belongs to the FBPase class 1 family. As to quaternary structure, homotetramer. The cofactor is Mg(2+).

Its subcellular location is the cytoplasm. The enzyme catalyses beta-D-fructose 1,6-bisphosphate + H2O = beta-D-fructose 6-phosphate + phosphate. It functions in the pathway carbohydrate biosynthesis; gluconeogenesis. The polypeptide is Fructose-1,6-bisphosphatase class 1 (Sodalis glossinidius (strain morsitans)).